The sequence spans 335 residues: Probable calcium-binding protein CML49 (335 aa).

The span at 1–10 (MSGYPPSSQG) shows a compositional bias: low complexity. Residues 1-154 (MSGYPPSSQG…PQASYGSPFA (154 aa)) are disordered. Positions 30 to 45 (NPPPYGSSGSNPPPPY) are enriched in pro residues. Residues 46–63 (GSSASSPYAVPYGAQPAP) show a composition bias toward low complexity. The span at 110 to 141 (DYGGYGGAPQQSGHGGGYGGAPQQSGHGGGYG) shows a compositional bias: gly residues. EF-hand domains follow at residues 164-199 (GTDPNIVACFQAADRDNSGFIDDKELQGALSSYNQS) and 230-265 (FSLQNWRSIFERFDKDRSGRIDTNELRDALMSLGFS). Residues D177, D179, S181, E188, D243, D245, S247, R249, and E254 each contribute to the Ca(2+) site.

Functionally, potential calcium sensor. This is Probable calcium-binding protein CML49 (CML49) from Arabidopsis thaliana (Mouse-ear cress).